The following is a 505-amino-acid chain: Histidine ammonia-lyase (505 aa).

A cross-link (5-imidazolinone (Ala-Gly)) is located at residues 144-146; the sequence is ASG. Ser-145 is modified (2,3-didehydroalanine (Ser)).

Belongs to the PAL/histidase family. In terms of processing, contains an active site 4-methylidene-imidazol-5-one (MIO), which is formed autocatalytically by cyclization and dehydration of residues Ala-Ser-Gly.

Its subcellular location is the cytoplasm. The catalysed reaction is L-histidine = trans-urocanate + NH4(+). It participates in amino-acid degradation; L-histidine degradation into L-glutamate; N-formimidoyl-L-glutamate from L-histidine: step 1/3. The sequence is that of Histidine ammonia-lyase from Legionella pneumophila (strain Corby).